The primary structure comprises 332 residues: Methionine synthase (332 aa).

The Zn(2+) site is built by His-211, Cys-213, and Cys-296.

Belongs to the archaeal MetE family. It depends on Zn(2+) as a cofactor.

Its pathway is amino-acid biosynthesis; L-methionine biosynthesis via de novo pathway. In terms of biological role, catalyzes the transfer of a methyl group to L-homocysteine resulting in methionine formation. The physiological methyl donor is unknown. The sequence is that of Methionine synthase from Saccharolobus islandicus (strain Y.N.15.51 / Yellowstone #2) (Sulfolobus islandicus).